Here is a 126-residue protein sequence, read N- to C-terminus: 5-hydroxyisourate hydrolase (126 aa).

Substrate contacts are provided by histidine 16, arginine 54, and tyrosine 123.

It belongs to the transthyretin family. 5-hydroxyisourate hydrolase subfamily. As to quaternary structure, homotetramer.

The catalysed reaction is 5-hydroxyisourate + H2O = 5-hydroxy-2-oxo-4-ureido-2,5-dihydro-1H-imidazole-5-carboxylate + H(+). Its function is as follows. Catalyzes the hydrolysis of 5-hydroxyisourate (HIU) to 2-oxo-4-hydroxy-4-carboxy-5-ureidoimidazoline (OHCU). The chain is 5-hydroxyisourate hydrolase from Pseudomonas aeruginosa (strain ATCC 15692 / DSM 22644 / CIP 104116 / JCM 14847 / LMG 12228 / 1C / PRS 101 / PAO1).